The primary structure comprises 310 residues: Olfactory receptor 5P80 (310 aa).

At methionine 1–alanine 25 the chain is on the extracellular side. Asparagine 5 carries an N-linked (GlcNAc...) asparagine glycan. The helical transmembrane segment at isoleucine 26 to isoleucine 46 threads the bilayer. At methionine 47–glutamine 54 the chain is on the cytoplasmic side. The chain crosses the membrane as a helical span at residues leucine 55 to serine 75. At serine 76–alanine 99 the chain is on the extracellular side. A disulfide bridge links cysteine 97 with cysteine 189. The helical transmembrane segment at glutamine 100–tyrosine 120 threads the bilayer. Residues aspartate 121–alanine 133 are Cytoplasmic-facing. The chain crosses the membrane as a helical span at residues threonine 134–valine 154. Over asparagine 155–glutamate 196 the chain is Extracellular. Asparagine 165 carries N-linked (GlcNAc...) asparagine glycosylation. The chain crosses the membrane as a helical span at residues valine 197–serine 217. Residues tyrosine 218 to alanine 237 lie on the Cytoplasmic side of the membrane. A helical transmembrane segment spans residues phenylalanine 238–isoleucine 258. Residues tyrosine 259–asparagine 271 are Extracellular-facing. A helical transmembrane segment spans residues lysine 272–leucine 292. Residues arginine 293–histidine 310 are Cytoplasmic-facing.

Belongs to the G-protein coupled receptor 1 family.

It is found in the cell membrane. Functionally, potential odorant receptor. This chain is Olfactory receptor 5P80, found in Mus musculus (Mouse).